The chain runs to 141 residues: Large ribosomal subunit protein uL11 (141 aa).

This sequence belongs to the universal ribosomal protein uL11 family. As to quaternary structure, part of the ribosomal stalk of the 50S ribosomal subunit. Interacts with L10 and the large rRNA to form the base of the stalk. L10 forms an elongated spine to which L12 dimers bind in a sequential fashion forming a multimeric L10(L12)X complex. In terms of processing, one or more lysine residues are methylated.

In terms of biological role, forms part of the ribosomal stalk which helps the ribosome interact with GTP-bound translation factors. The sequence is that of Large ribosomal subunit protein uL11 from Chloroherpeton thalassium (strain ATCC 35110 / GB-78).